The following is a 286-amino-acid chain: uncharacterized protein (286 aa).

3 residues coordinate NADP(+): isoleucine 54, asparagine 128, and lysine 162. Serine 178 (proton donor) is an active-site residue. NADP(+) is bound by residues tyrosine 192, lysine 196, isoleucine 225, and threonine 227. Tyrosine 192 (proton acceptor) is an active-site residue. The active-site Lowers pKa of active site Tyr is lysine 196.

This sequence belongs to the short-chain dehydrogenases/reductases (SDR) family.

This is an uncharacterized protein from Schizosaccharomyces pombe (strain 972 / ATCC 24843) (Fission yeast).